The chain runs to 490 residues: Arginine decarboxylase (490 aa).

Lysine 226 is modified (N6-(pyridoxal phosphate)lysine).

This sequence belongs to the Orn/Lys/Arg decarboxylase class-I family. Pyridoxal 5'-phosphate is required as a cofactor.

The protein resides in the cytoplasm. It carries out the reaction L-arginine + H(+) = agmatine + CO2. Its pathway is amine and polyamine biosynthesis; agmatine biosynthesis; agmatine from L-arginine: step 1/1. Functionally, catalyzes the formation of agmatine from arginine. This is Arginine decarboxylase (speA) from Bacillus subtilis (strain 168).